The primary structure comprises 225 residues: Membrane-spanning 4-domains subfamily A member 4D (225 aa).

The Cytoplasmic portion of the chain corresponds to Met1 to Lys42. The helical transmembrane segment at Val43 to Ile63 threads the bilayer. Residues Leu64–Ser73 are Extracellular-facing. Residues Val74 to Ile94 form a helical membrane-spanning segment. The Cytoplasmic portion of the chain corresponds to Ala95–Thr113. A helical transmembrane segment spans residues Ile114–Val134. Residues Phe135–Asp148 lie on the Extracellular side of the membrane. A helical membrane pass occupies residues Val149–Gly169. The Cytoplasmic segment spans residues Cys170–Val225.

This sequence belongs to the MS4A family. As to expression, expressed in thymus, spleen, peripheral lymph node, liver, kidney, heart, colon, lung, and testes.

Its subcellular location is the membrane. Functionally, may be involved in signal transduction as a component of a multimeric receptor complex. This Mus musculus (Mouse) protein is Membrane-spanning 4-domains subfamily A member 4D (Ms4a4d).